We begin with the raw amino-acid sequence, 602 residues long: Aspartate--tRNA(Asp/Asn) ligase (602 aa).

L-aspartate is bound at residue Glu-191. The aspartate stretch occupies residues 215-218 (QLYK). Arg-237 contributes to the L-aspartate binding site. ATP-binding positions include 237 to 239 (RDE) and Gln-246. His-465 is an L-aspartate binding site. Glu-499 contributes to the ATP binding site. Arg-506 is an L-aspartate binding site. 551–554 (GLDR) provides a ligand contact to ATP.

It belongs to the class-II aminoacyl-tRNA synthetase family. Type 1 subfamily. Homodimer.

The protein localises to the cytoplasm. The catalysed reaction is tRNA(Asx) + L-aspartate + ATP = L-aspartyl-tRNA(Asx) + AMP + diphosphate. Aspartyl-tRNA synthetase with relaxed tRNA specificity since it is able to aspartylate not only its cognate tRNA(Asp) but also tRNA(Asn). Reaction proceeds in two steps: L-aspartate is first activated by ATP to form Asp-AMP and then transferred to the acceptor end of tRNA(Asp/Asn). The protein is Aspartate--tRNA(Asp/Asn) ligase of Treponema pallidum (strain Nichols).